We begin with the raw amino-acid sequence, 432 residues long: Trigger factor (432 aa).

The PPIase FKBP-type domain occupies 161 to 246; sequence GTRATINFVG…VVKVEARELP (86 aa).

Belongs to the FKBP-type PPIase family. Tig subfamily.

It localises to the cytoplasm. It carries out the reaction [protein]-peptidylproline (omega=180) = [protein]-peptidylproline (omega=0). Its function is as follows. Involved in protein export. Acts as a chaperone by maintaining the newly synthesized protein in an open conformation. Functions as a peptidyl-prolyl cis-trans isomerase. The polypeptide is Trigger factor (Aliivibrio salmonicida (strain LFI1238) (Vibrio salmonicida (strain LFI1238))).